A 240-amino-acid chain; its full sequence is Ribonuclease PH (240 aa).

Phosphate contacts are provided by residues Arg-87 and 125–127; that span reads GTR.

The protein belongs to the RNase PH family. As to quaternary structure, homohexameric ring arranged as a trimer of dimers.

The catalysed reaction is tRNA(n+1) + phosphate = tRNA(n) + a ribonucleoside 5'-diphosphate. Its function is as follows. Phosphorolytic 3'-5' exoribonuclease that plays an important role in tRNA 3'-end maturation. Removes nucleotide residues following the 3'-CCA terminus of tRNAs; can also add nucleotides to the ends of RNA molecules by using nucleoside diphosphates as substrates, but this may not be physiologically important. Probably plays a role in initiation of 16S rRNA degradation (leading to ribosome degradation) during starvation. This Crocosphaera subtropica (strain ATCC 51142 / BH68) (Cyanothece sp. (strain ATCC 51142)) protein is Ribonuclease PH.